A 158-amino-acid chain; its full sequence is MKISLSLQQDFQSPELELKRAQLKKIIETTLRHVGYKEDCEIGIACVDLEESHQLNLQYREKDKPTNALSFPSDIPEEVLPMLDALPLGDLVICIPVVLQEALEQKKTAQNHFAHLLVHGVLHLLGYDHETSDEDAEEMEGLEIEILAKLNIANPYQE.

Zn(2+)-binding residues include His119, His123, and His129.

This sequence belongs to the endoribonuclease YbeY family. It depends on Zn(2+) as a cofactor.

The protein localises to the cytoplasm. Its function is as follows. Single strand-specific metallo-endoribonuclease involved in late-stage 70S ribosome quality control and in maturation of the 3' terminus of the 16S rRNA. In Acinetobacter baumannii (strain SDF), this protein is Endoribonuclease YbeY.